A 112-amino-acid chain; its full sequence is MCSPSETKTSVIDQLKRAASAEEFFTTLGVDYDPQVVNVARLHILKRMGQYLASEDLAGLSNCAVTERCKAVLERAYADFVASSPLDQRVFKVLKDAVSPKRGAFVPLDALK.

The protein belongs to the NifW family. In terms of assembly, homotrimer; associates with NifD.

In terms of biological role, may protect the nitrogenase Fe-Mo protein from oxidative damage. The protein is Nitrogenase-stabilizing/protective protein NifW of Rhodopseudomonas palustris (strain BisA53).